The chain runs to 1391 residues: DNA-directed RNA polymerase subunit beta' (1391 aa).

Zn(2+) is bound by residues Cys-72, Cys-74, Cys-87, and Cys-90. Mg(2+)-binding residues include Asp-462, Asp-464, and Asp-466. Zn(2+) contacts are provided by Cys-816, Cys-890, Cys-897, and Cys-900.

It belongs to the RNA polymerase beta' chain family. The RNAP catalytic core consists of 2 alpha, 1 beta, 1 beta' and 1 omega subunit. When a sigma factor is associated with the core the holoenzyme is formed, which can initiate transcription. It depends on Mg(2+) as a cofactor. Zn(2+) is required as a cofactor.

It carries out the reaction RNA(n) + a ribonucleoside 5'-triphosphate = RNA(n+1) + diphosphate. DNA-dependent RNA polymerase catalyzes the transcription of DNA into RNA using the four ribonucleoside triphosphates as substrates. The protein is DNA-directed RNA polymerase subunit beta' of Neisseria meningitidis serogroup C / serotype 2a (strain ATCC 700532 / DSM 15464 / FAM18).